The following is a 677-amino-acid chain: uncharacterized protein (677 aa).

3 consecutive transmembrane segments (helical) span residues 80 to 102 (ILSLFATLVLMVGVFFCAPRASF), 338 to 360 (ALLSNASGAFVIAQAVPVLLFGF), and 367 to 386 (LVAMVAVVTTFLLVFQLLSL). Residues 523-556 (DEAASLPSDSSPEEDLDPLEEVESIEGTAEESTR) are disordered. Acidic residues predominate over residues 533–546 (SPEEDLDPLEEVES).

It localises to the cell membrane. This is an uncharacterized protein from Treponema pallidum (strain Nichols).